A 291-amino-acid polypeptide reads, in one-letter code: Protease HtpX homolog (291 aa).

The next 2 helical transmembrane spans lie at 4-24 (VVLF…SARV) and 38-58 (MGML…ISLL). Position 144 (His-144) interacts with Zn(2+). Residue Glu-145 is part of the active site. Residue His-148 participates in Zn(2+) binding. 2 consecutive transmembrane segments (helical) span residues 159 to 179 (LIQG…AYAI) and 199 to 219 (ISSI…VMYF). Zn(2+) is bound at residue Glu-224.

The protein belongs to the peptidase M48B family. Requires Zn(2+) as cofactor.

The protein localises to the cell inner membrane. The sequence is that of Protease HtpX homolog from Chlorobium phaeobacteroides (strain DSM 266 / SMG 266 / 2430).